Consider the following 657-residue polypeptide: WD repeat-containing protein 70 (657 aa).

2 disordered regions span residues 1 to 21 and 43 to 172; these read MEHS…DPQL and FEQT…PVQR. A compositionally biased stretch (basic and acidic residues) spans 45-78; sequence QTRRTAVERSRKTLEAREKEEEMNREKELRKQIE. A compositionally biased stretch (low complexity) spans 82–105; sequence PAPSSSSAARERSQSSCRDTSSSD. 2 stretches are compositionally biased toward acidic residues: residues 106–119 and 150–168; these read SESD…DDEL and EEGE…EEDN. WD repeat units lie at residues 183–222, 230–271, 284–324, 333–372, 379–418, 424–469, and 472–511; these read HGTK…ASFK, CECH…ECIK, GHTA…KQKS, GKKV…HPKF, DPGT…KPLF, PTLF…RVYE, and ITDA…QRGA. Lysine 299 participates in a covalent cross-link: Glycyl lysine isopeptide (Lys-Gly) (interchain with G-Cter in SUMO2). Position 455 is an N6-acetyllysine (lysine 455). Positions 543 to 568 are enriched in basic and acidic residues; the sequence is REPRQRSTRKQLEKDRLDPLKSHKPE. The segment at 543–584 is disordered; the sequence is REPRQRSTRKQLEKDRLDPLKSHKPEPPVAGPGRGGRVGTHG. A compositionally biased stretch (gly residues) spans 574-584; that stretch reads PGRGGRVGTHG. At threonine 582 the chain carries Phosphothreonine. Residues lysine 593 and lysine 599 each participate in a glycyl lysine isopeptide (Lys-Gly) (interchain with G-Cter in SUMO2) cross-link. 2 positions are modified to phosphoserine: serine 624 and serine 641. The tract at residues 634-657 is disordered; that stretch reads TMFAQVESDDEESKNEPEWKKRKI. The segment covering 647–657 has biased composition (basic and acidic residues); sequence KNEPEWKKRKI.

It belongs to the WD repeat GAD-1 family.

This chain is WD repeat-containing protein 70 (Wdr70), found in Mus musculus (Mouse).